A 168-amino-acid chain; its full sequence is MSQTVHFQDNPVTVANVIPQAGSKAQAFTLVAKDLSDVSLSQYAGKRKVLNIFPSIDTGVCAASVRKFNQLATEVENTVVLCVSADLPFAQSRFCGAEGLSNVITLSTLRNNEFLKNYGVEIVDGPLKGLAARAVIVLDENDNVIFSQLVDEITHEPDYDAALNVLKA.

The region spanning 19 to 168 (PQAGSKAQAF…YDAALNVLKA (150 aa)) is the Thioredoxin domain. Residue cysteine 61 is the Cysteine sulfenic acid (-SOH) intermediate of the active site. Residues cysteine 61 and cysteine 95 are joined by a disulfide bond.

Belongs to the peroxiredoxin family. Tpx subfamily. Homodimer.

The enzyme catalyses a hydroperoxide + [thioredoxin]-dithiol = an alcohol + [thioredoxin]-disulfide + H2O. Its function is as follows. Thiol-specific peroxidase that catalyzes the reduction of hydrogen peroxide and organic hydroperoxides to water and alcohols, respectively. Plays a role in cell protection against oxidative stress by detoxifying peroxides. This Salmonella typhi protein is Thiol peroxidase.